The primary structure comprises 152 residues: UPF0266 membrane protein CKO_01158 (152 aa).

The next 3 membrane-spanning stretches (helical) occupy residues 6–26 (LVLVLFIVALLAYAIYDQFIM), 45–65 (VDSVIFVGLVAILIYNNVTSH), and 67–87 (AQITTWLLCALALMGFYIFWV).

The protein belongs to the UPF0266 family.

The protein resides in the cell inner membrane. The polypeptide is UPF0266 membrane protein CKO_01158 (Citrobacter koseri (strain ATCC BAA-895 / CDC 4225-83 / SGSC4696)).